The sequence spans 373 residues: Transaldolase (373 aa).

Lysine 143 (schiff-base intermediate with substrate) is an active-site residue.

The protein belongs to the transaldolase family. Type 2 subfamily.

The protein localises to the cytoplasm. It catalyses the reaction D-sedoheptulose 7-phosphate + D-glyceraldehyde 3-phosphate = D-erythrose 4-phosphate + beta-D-fructose 6-phosphate. It functions in the pathway carbohydrate degradation; pentose phosphate pathway; D-glyceraldehyde 3-phosphate and beta-D-fructose 6-phosphate from D-ribose 5-phosphate and D-xylulose 5-phosphate (non-oxidative stage): step 2/3. In terms of biological role, transaldolase is important for the balance of metabolites in the pentose-phosphate pathway. The sequence is that of Transaldolase (tal) from Mycobacterium bovis (strain ATCC BAA-935 / AF2122/97).